A 130-amino-acid chain; its full sequence is Small ribosomal subunit protein uS9 (130 aa).

Belongs to the universal ribosomal protein uS9 family.

The protein is Small ribosomal subunit protein uS9 of Syntrophobacter fumaroxidans (strain DSM 10017 / MPOB).